Here is a 185-residue protein sequence, read N- to C-terminus: Ribosome-recycling factor (185 aa).

It belongs to the RRF family.

The protein localises to the cytoplasm. In terms of biological role, responsible for the release of ribosomes from messenger RNA at the termination of protein biosynthesis. May increase the efficiency of translation by recycling ribosomes from one round of translation to another. The chain is Ribosome-recycling factor from Methylococcus capsulatus (strain ATCC 33009 / NCIMB 11132 / Bath).